Consider the following 436-residue polypeptide: 3-ketoacyl-CoA thiolase (436 aa).

The Acyl-thioester intermediate role is filled by Cys-99. Residues His-392 and Cys-422 each act as proton acceptor in the active site.

This sequence belongs to the thiolase-like superfamily. Thiolase family. As to quaternary structure, heterotetramer of two alpha chains (FadJ) and two beta chains (FadI).

The protein localises to the cytoplasm. It carries out the reaction an acyl-CoA + acetyl-CoA = a 3-oxoacyl-CoA + CoA. It participates in lipid metabolism; fatty acid beta-oxidation. Its function is as follows. Catalyzes the final step of fatty acid oxidation in which acetyl-CoA is released and the CoA ester of a fatty acid two carbons shorter is formed. This Salmonella paratyphi A (strain ATCC 9150 / SARB42) protein is 3-ketoacyl-CoA thiolase.